The sequence spans 566 residues: Proline--tRNA ligase (566 aa).

It belongs to the class-II aminoacyl-tRNA synthetase family. ProS type 1 subfamily. In terms of assembly, homodimer.

The protein resides in the cytoplasm. It catalyses the reaction tRNA(Pro) + L-proline + ATP = L-prolyl-tRNA(Pro) + AMP + diphosphate. Its function is as follows. Catalyzes the attachment of proline to tRNA(Pro) in a two-step reaction: proline is first activated by ATP to form Pro-AMP and then transferred to the acceptor end of tRNA(Pro). As ProRS can inadvertently accommodate and process non-cognate amino acids such as alanine and cysteine, to avoid such errors it has two additional distinct editing activities against alanine. One activity is designated as 'pretransfer' editing and involves the tRNA(Pro)-independent hydrolysis of activated Ala-AMP. The other activity is designated 'posttransfer' editing and involves deacylation of mischarged Ala-tRNA(Pro). The misacylated Cys-tRNA(Pro) is not edited by ProRS. The chain is Proline--tRNA ligase from Bacillus cereus (strain Q1).